Consider the following 157-residue polypeptide: 6,7-dimethyl-8-ribityllumazine synthase (157 aa).

Residues phenylalanine 24, 58–60 (SFE), and 82–84 (AVI) contribute to the 5-amino-6-(D-ribitylamino)uracil site. Position 87 to 88 (87 to 88 (ET)) interacts with (2S)-2-hydroxy-3-oxobutyl phosphate. Histidine 90 functions as the Proton donor in the catalytic mechanism. A 5-amino-6-(D-ribitylamino)uracil-binding site is contributed by phenylalanine 115. Arginine 129 is a binding site for (2S)-2-hydroxy-3-oxobutyl phosphate.

The protein belongs to the DMRL synthase family.

It carries out the reaction (2S)-2-hydroxy-3-oxobutyl phosphate + 5-amino-6-(D-ribitylamino)uracil = 6,7-dimethyl-8-(1-D-ribityl)lumazine + phosphate + 2 H2O + H(+). The protein operates within cofactor biosynthesis; riboflavin biosynthesis; riboflavin from 2-hydroxy-3-oxobutyl phosphate and 5-amino-6-(D-ribitylamino)uracil: step 1/2. Functionally, catalyzes the formation of 6,7-dimethyl-8-ribityllumazine by condensation of 5-amino-6-(D-ribitylamino)uracil with 3,4-dihydroxy-2-butanone 4-phosphate. This is the penultimate step in the biosynthesis of riboflavin. This Thermus thermophilus (strain ATCC BAA-163 / DSM 7039 / HB27) protein is 6,7-dimethyl-8-ribityllumazine synthase.